We begin with the raw amino-acid sequence, 479 residues long: Glutamate--tRNA ligase (479 aa).

A 'HIGH' region motif is present at residues 9 to 19 (PSPTGLFHIGT). The 'KMSKS' region motif lies at 248–252 (KLSKR). K251 is an ATP binding site.

Belongs to the class-I aminoacyl-tRNA synthetase family. Glutamate--tRNA ligase type 1 subfamily. In terms of assembly, monomer.

The protein resides in the cytoplasm. The catalysed reaction is tRNA(Glu) + L-glutamate + ATP = L-glutamyl-tRNA(Glu) + AMP + diphosphate. In terms of biological role, catalyzes the attachment of glutamate to tRNA(Glu) in a two-step reaction: glutamate is first activated by ATP to form Glu-AMP and then transferred to the acceptor end of tRNA(Glu). This Prochlorococcus marinus (strain MIT 9312) protein is Glutamate--tRNA ligase.